Here is a 314-residue protein sequence, read N- to C-terminus: Very long chain fatty acid elongase 4 (314 aa).

N-linked (GlcNAc...) asparagine glycosylation is present at N20. 7 helical membrane-spanning segments follow: residues 42 to 62, 78 to 98, 127 to 147, 165 to 185, 188 to 208, 217 to 237, and 247 to 267; these read LMQS…FVWL, VLII…RELF, ALWW…FFIL, MFTL…FFGA, NSFI…GPWI, YLTM…ALSL, and MHWA…NFYI. The disordered stretch occupies residues 275–314; sequence KPKAGKTAMNGISANGVSKSEKQLMIENGKKQKNGKAKGD. The segment covering 293-304 has biased composition (basic and acidic residues); that stretch reads KSEKQLMIENGK. The segment covering 305–314 has biased composition (basic residues); sequence KQKNGKAKGD. Positions 310–314 match the Di-lysine motif motif; it reads KAKGD.

This sequence belongs to the ELO family. ELOVL4 subfamily. As to quaternary structure, oligomer. In terms of processing, N-glycosylated. Expressed in the retina and at much lower level in the brain. Ubiquitous, highest expression in thymus, followed by testis, small intestine, ovary, and prostate. Little or no expression in heart, lung, liver, or leukocates.

Its subcellular location is the endoplasmic reticulum membrane. The enzyme catalyses a very-long-chain acyl-CoA + malonyl-CoA + H(+) = a very-long-chain 3-oxoacyl-CoA + CO2 + CoA. The catalysed reaction is tetracosanoyl-CoA + malonyl-CoA + H(+) = 3-oxohexacosanoyl-CoA + CO2 + CoA. It catalyses the reaction hexacosanoyl-CoA + malonyl-CoA + H(+) = 3-oxooctacosanyol-CoA + CO2 + CoA. It carries out the reaction octacosanoyl-CoA + malonyl-CoA + H(+) = 3-oxo-triacontanoyl-CoA + CO2 + CoA. The enzyme catalyses triacontanoyl-CoA + malonyl-CoA + H(+) = 3-oxo-dotriacontanoyl-CoA + CO2 + CoA. The catalysed reaction is (19Z,22Z,25Z,28Z,31Z)-tetratriacontapentaenoyl-CoA + malonyl-CoA + H(+) = 3-oxo-(21Z,24Z,27Z,30Z,33Z)-hexatriacontapentaenoyl-CoA + CO2 + CoA. It catalyses the reaction (4Z,7Z,10Z,13Z,16Z,19Z)-docosahexaenoyl-CoA + malonyl-CoA + H(+) = 3-oxo-(6Z,9Z,12Z,15Z,18Z,21Z)-tetracosahexaenoyl-CoA + CO2 + CoA. It carries out the reaction (7Z,10Z,13Z,16Z)-docosatetraenoyl-CoA + malonyl-CoA + H(+) = (9Z,12Z,15Z,18Z)-3-oxotetracosatetraenoyl-CoA + CO2 + CoA. The enzyme catalyses (11Z,14Z,17Z,20Z,23Z)-hexacosapentaenoyl-CoA + malonyl-CoA + H(+) = 3-oxo-(13Z,16Z,19Z,22Z,25Z)-octacosapentaenoyl-CoA + CO2 + CoA. The catalysed reaction is (13Z,16Z,19Z,22Z,25Z)-octacosapentaenoyl-CoA + malonyl-CoA + H(+) = 3-oxo-(15Z,18Z,21Z,24Z,27Z)-triacontapentaenoyl-CoA + CO2 + CoA. It catalyses the reaction (15Z,18Z,21Z,24Z,27Z)-triacontapentaenoyl-CoA + malonyl-CoA + H(+) = 3-oxo-(17Z,20Z,23Z,26Z,29Z)-dotriacontapentaenoyl-CoA + CO2 + CoA. It carries out the reaction (17Z,20Z,23Z,26Z,29Z)-dotriacontapentaenoyl-CoA + malonyl-CoA + H(+) = 3-oxo-(19Z,22Z,25Z,28Z,31Z)-tetratriacontapentaenoyl-CoA + CO2 + CoA. The enzyme catalyses (21Z,24Z,27Z,30Z,33Z)-hexatriacontapentaenoyl-CoA + malonyl-CoA + H(+) = 3-oxo-(23Z,26Z,29Z,32Z,35Z)-octatriacontapentaenoyl-CoA + CO2 + CoA. The catalysed reaction is (11Z,14Z,17Z,20Z)-hexacosatetraenoyl-CoA + malonyl-CoA + H(+) = (13Z,16Z,19Z,22Z)-3-oxooctacosatetraenoyl-CoA + CO2 + CoA. It catalyses the reaction (13Z,16Z,19Z,22Z)-octacosatetraenoyl-CoA + malonyl-CoA + H(+) = 3-oxo-(15Z,18Z,21Z,24Z)-triacontatetraenoyl-CoA + CO2 + CoA. It carries out the reaction (15Z,18Z,21Z,24Z)-triacontatetraenoyl-CoA + malonyl-CoA + H(+) = 3-oxo-(17Z,20Z,23Z,26Z)-dotriacontatetraenoyl-CoA + CO2 + CoA. The enzyme catalyses (17Z,20Z,23Z,26Z)-dotriacontatetraenoyl-CoA + malonyl-CoA + H(+) = 3-oxo-(19Z,22Z,25Z,28Z)-tetratriacontatetraenoyl-CoA + CO2 + CoA. The catalysed reaction is (19Z,22Z,25Z,28Z)-tetratriacontatetraenoyl-CoA + malonyl-CoA + H(+) = 3-oxo-(21Z,24Z,27Z,30Z)-hexatriacontatetraenoyl-CoA + CO2 + CoA. It catalyses the reaction (21Z,24Z,27Z,30Z)-hexatriacontatetraenoyl-CoA + malonyl-CoA + H(+) = 3-oxo-(23Z,26Z,29Z,32Z)-octatriacontatetraenoyl-CoA + CO2 + CoA. It carries out the reaction (6Z,9Z,12Z,15Z,18Z,21Z)-tetracosahexaenoyl-CoA + malonyl-CoA + H(+) = 3-oxo-(8Z,11Z,14Z,17Z,20Z,23Z)-hexacosahexaenoyl-CoA + CO2 + CoA. The enzyme catalyses (8Z,11Z,14Z,17Z,20Z,23Z)-hexacosahexaenoyl-CoA + malonyl-CoA + H(+) = 3-oxo-(10Z,13Z,16Z,19Z,22Z,25Z)-octacosahexaenoyl-CoA + CO2 + CoA. The catalysed reaction is (10Z,13Z,16Z,19Z,22Z,25Z)-octacosahexaenoyl-CoA + malonyl-CoA + H(+) = 3-oxo-(12Z,15Z,18Z,21Z,24Z,27Z)-triacontahexaenoyl-CoA + CO2 + CoA. It catalyses the reaction (12Z,15Z,18Z,21Z,24Z,27Z)-triacontahexaenoyl-CoA + malonyl-CoA + H(+) = 3-oxo-(14Z,17Z,20Z,23Z,26Z,29Z)-dotriacontahexaenoyl-CoA + CO2 + CoA. It carries out the reaction (14Z,17Z,20Z,23Z,26Z,29Z)-dotriacontahexaenoyl-CoA + malonyl-CoA + H(+) = 3-oxo-(16Z,19Z,22Z,25Z,28Z,31Z)-tetratriacontahexaenoyl-CoA + CO2 + CoA. The enzyme catalyses (16Z,19Z,22Z,25Z,28Z,31Z)-tetratriacontahexaenoyl-CoA + malonyl-CoA + H(+) = 3-oxo-(18Z,21Z,24Z,27Z,30Z,33Z)-hexatriacontahexaenoyl-CoA + CO2 + CoA. The catalysed reaction is (9Z,12Z,15Z,18Z,21Z)-tetracosapentaenoyl-CoA + malonyl-CoA + H(+) = 3-oxo-(11Z,14Z,17Z,20Z,23Z)-hexacosapentaenoyl-CoA + CO2 + CoA. It functions in the pathway lipid metabolism; fatty acid biosynthesis. Catalyzes the first and rate-limiting reaction of the four reactions that constitute the long-chain fatty acids elongation cycle. This endoplasmic reticulum-bound enzymatic process allows the addition of 2 carbons to the chain of long- and very long-chain fatty acids (VLCFAs) per cycle. Condensing enzyme that catalyzes the synthesis of very long chain saturated (VLC-SFA) and polyunsaturated (PUFA) fatty acids that are involved in multiple biological processes as precursors of membrane lipids and lipid mediators. May play a critical role in early brain and skin development. This is Very long chain fatty acid elongase 4 from Homo sapiens (Human).